A 141-amino-acid chain; its full sequence is Lutropin subunit beta (141 aa).

A signal peptide spans Met1–Ala20. Cystine bridges form between Cys29-Cys77, Cys43-Cys92, Cys46-Cys130, Cys54-Cys108, Cys58-Cys110, and Cys113-Cys120. Asn33 carries N-linked (GlcNAc...) asparagine glycosylation.

This sequence belongs to the glycoprotein hormones subunit beta family. Heterodimer of a common alpha chain and a unique beta chain which confers biological specificity to thyrotropin, lutropin, follitropin and gonadotropin.

The protein resides in the secreted. Promotes spermatogenesis and ovulation by stimulating the testes and ovaries to synthesize steroids. The chain is Lutropin subunit beta (Lhb) from Rattus norvegicus (Rat).